A 231-amino-acid chain; its full sequence is uncharacterized protein (231 aa).

10–34 (VVTGAGSGIGEAIATLLHEEGAKVV) is a binding site for NADP(+). Ser-140 is a substrate binding site. The Proton acceptor role is filled by Tyr-153.

Belongs to the short-chain dehydrogenases/reductases (SDR) family.

This is an uncharacterized protein from Staphylococcus aureus (strain COL).